A 1106-amino-acid polypeptide reads, in one-letter code: Zinc finger protein GLI1 (1106 aa).

Residues 1–20 are SNAG domain; that stretch reads MFNSMTPPPISSYGEPCCLR. Positions 120 to 124 are interaction with SUFU; the sequence is SYGHL. 5 C2H2-type zinc fingers span residues 235–260, 268–295, 301–325, 331–356, and 362–387; these read TDCRWDGCSQEFDSQEQLVHHINSEH, FVCHWGGCSRELRPFKAQYMLVVHMRRH, HKCTFEGCRKSYSRLENLKTHLRSH, YMCEHEGCSKAFSNASDRAKHQNRTH, and YVCKLPGCTKRYTDPSSLRKHVKTVH. The interval 283-291 is interaction with DNA; it reads KAQYMLVVH. Interaction with DNA stretches follow at residues 345–350 and 375–381; these read ASDRAK and DPSSLRK. Disordered regions lie at residues 375 to 485, 516 to 580, 732 to 792, 817 to 889, and 914 to 942; these read DPSS…DEGP, GLKL…SLPG, YGGP…LYPG, EQGC…PTHS, and GREDAPAQEPSYQSPKFLGGSQVSPSRAK. Basic and acidic residues predominate over residues 413 to 428; the sequence is EPKREREGGPIREESR. Residues 442-463 show a composition bias toward polar residues; the sequence is PGAQSSCSSDHSPAGSAANTDS. Lysine 518 carries the N6-acetyllysine modification. 2 stretches are compositionally biased toward low complexity: residues 544 to 560 and 737 to 753; these read SSSSSISSAYTVSRRSS and GAAAEPYGARGPGSLPL. The span at 754–766 shows a compositional bias: pro residues; the sequence is GPGPPTNYGPNPC. The segment covering 768–779 has biased composition (polar residues); sequence QQASYPDPTQET. A Glycyl lysine isopeptide (Lys-Gly) (interchain with G-Cter in SUMO2) cross-link involves residue lysine 1003. Positions 1054–1087 are disordered; the sequence is DEPQGLSPPPSHDQRGSSGHTPPPSGPPNMAVGN.

Belongs to the GLI C2H2-type zinc-finger protein family. As to quaternary structure, interacts with KIF7. Interacts with STK36. Interacts with ZIC1; the interaction enhances transcription activation. Interacts with SUFU; this inhibits transcriptional activation by GLI1. In terms of processing, phosphorylated in vitro by ULK3. Acetylation at Lys-518 down-regulates transcriptional activity. Deacetylated by HDAC1. Post-translationally, ubiquitinated by the CRL2(FEM1B) complex, suppressing GLI1 transcriptional activator activity. As to expression, detected in testis (at protein level). Testis, myometrium and fallopian tube. Also expressed in the brain with highest expression in the cerebellum, optic nerve and olfactory tract. Isoform 1 is detected in brain, spleen, pancreas, liver, kidney and placenta; isoform 2 is not detectable in these tissues.

It is found in the cytoplasm. Its subcellular location is the nucleus. Its function is as follows. Acts as a transcriptional activator. Binds to the DNA consensus sequence 5'-GACCACCCA-3'. Regulates the transcription of specific genes during normal development. Plays a role in craniofacial development and digital development, as well as development of the central nervous system and gastrointestinal tract. Mediates SHH signaling. Plays a role in cell proliferation and differentiation via its role in SHH signaling. Acts as a transcriptional activator, but activates a different set of genes than isoform 1. Activates expression of CD24, unlike isoform 1. Mediates SHH signaling. Promotes cancer cell migration. This is Zinc finger protein GLI1 (GLI1) from Homo sapiens (Human).